The sequence spans 253 residues: 5'/3'-nucleotidase SurE (253 aa).

Positions 8, 9, 39, and 92 each coordinate a divalent metal cation.

The protein belongs to the SurE nucleotidase family. It depends on a divalent metal cation as a cofactor.

Its subcellular location is the cytoplasm. The catalysed reaction is a ribonucleoside 5'-phosphate + H2O = a ribonucleoside + phosphate. It catalyses the reaction a ribonucleoside 3'-phosphate + H2O = a ribonucleoside + phosphate. It carries out the reaction [phosphate](n) + H2O = [phosphate](n-1) + phosphate + H(+). In terms of biological role, nucleotidase with a broad substrate specificity as it can dephosphorylate various ribo- and deoxyribonucleoside 5'-monophosphates and ribonucleoside 3'-monophosphates with highest affinity to 3'-AMP. Also hydrolyzes polyphosphate (exopolyphosphatase activity) with the preference for short-chain-length substrates (P20-25). Might be involved in the regulation of dNTP and NTP pools, and in the turnover of 3'-mononucleotides produced by numerous intracellular RNases (T1, T2, and F) during the degradation of various RNAs. This chain is 5'/3'-nucleotidase SurE, found in Citrobacter koseri (strain ATCC BAA-895 / CDC 4225-83 / SGSC4696).